A 364-amino-acid chain; its full sequence is Spermidine/putrescine import ATP-binding protein PotA (364 aa).

The 231-residue stretch at 5–235 folds into the ABC transporter domain; it reads LSFKDVSKGF…PVNRFVADFI (231 aa). 37–44 is a binding site for ATP; the sequence is GPSGCGKT.

This sequence belongs to the ABC transporter superfamily. Spermidine/putrescine importer (TC 3.A.1.11.1) family. In terms of assembly, the complex is composed of two ATP-binding proteins (PotA), two transmembrane proteins (PotB and PotC) and a solute-binding protein (PotD).

It is found in the cell membrane. It carries out the reaction ATP + H2O + polyamine-[polyamine-binding protein]Side 1 = ADP + phosphate + polyamineSide 2 + [polyamine-binding protein]Side 1.. Its function is as follows. Part of the ABC transporter complex PotABCD involved in spermidine/putrescine import. Responsible for energy coupling to the transport system. This chain is Spermidine/putrescine import ATP-binding protein PotA, found in Staphylococcus epidermidis (strain ATCC 35984 / DSM 28319 / BCRC 17069 / CCUG 31568 / BM 3577 / RP62A).